Reading from the N-terminus, the 363-residue chain is 3-isopropylmalate dehydrogenase (363 aa).

78 to 91 (GPKWENLPPESQPE) provides a ligand contact to NAD(+). Substrate-binding residues include Arg-99, Arg-109, Arg-138, and Asp-227. Mg(2+) contacts are provided by Asp-227, Asp-251, and Asp-255. Residue 285–297 (GSAPDIAGKNIAN) participates in NAD(+) binding.

Belongs to the isocitrate and isopropylmalate dehydrogenases family. LeuB type 1 subfamily. As to quaternary structure, homodimer. Mg(2+) serves as cofactor. The cofactor is Mn(2+).

It is found in the cytoplasm. It catalyses the reaction (2R,3S)-3-isopropylmalate + NAD(+) = 4-methyl-2-oxopentanoate + CO2 + NADH. It participates in amino-acid biosynthesis; L-leucine biosynthesis; L-leucine from 3-methyl-2-oxobutanoate: step 3/4. Functionally, catalyzes the oxidation of 3-carboxy-2-hydroxy-4-methylpentanoate (3-isopropylmalate) to 3-carboxy-4-methyl-2-oxopentanoate. The product decarboxylates to 4-methyl-2 oxopentanoate. The sequence is that of 3-isopropylmalate dehydrogenase from Salmonella typhi.